We begin with the raw amino-acid sequence, 421 residues long: E3 ubiquitin-protein ligase RMD5 (421 aa).

The CTLH domain maps to 176-236; it reads EFIEMGQIVH…QIVKHGNPVE (61 aa). The RING-Gid-type zinc-finger motif lies at 361 to 404; that stretch reads CPVLKEETTTENPPYSLACHHIISKKALDRLSKNGTITFKCPYC.

It belongs to the RMD5/GID2 family. Identified in the GID/CTLH complex. In the absence of stress, the complex exists as an inactive anticipatory complex (GID(Ant)), composed of VID30/GID1, the E3 ubiquitin-ligase RMD5/GID2, VID28/GID5, GID8, and the RING-like subunit FYV10/GID9, awaiting a substrate receptor to form the active E3 ligase complex. When cells are shifted to glucose-containing medium, the substrate receptor VID24/GID4 is induced and becomes part of the complex, named GID(SR4). Additionally, GID7 transforms the GID(SR4) E3 ligase core into a higher-order supramolecular assembly (Chelator-GID(SR4)) specifically tailored for FBP1 ubiquitination. Under osmotic or heat stress, the substrate receptor GID10 is induced and becomes part of the complex, named GID(SR10). Within the GID complex, interacts directly with GID8, FYV10/GID9 and VID28/GID5.

The protein resides in the cytoplasm. The enzyme catalyses S-ubiquitinyl-[E2 ubiquitin-conjugating enzyme]-L-cysteine + [acceptor protein]-L-lysine = [E2 ubiquitin-conjugating enzyme]-L-cysteine + N(6)-ubiquitinyl-[acceptor protein]-L-lysine.. It participates in protein modification; protein ubiquitination. E3 ubiquitin-protein ligase component of the GID E3 ligase complex recruiting N termini and catalyzing ubiquitination of proteins targeted for degradation. GID E3 is regulated through assembly with interchangeable N-degron-binding substrate receptors induced by distinct environmental perturbations. Required for the adaptation to the presence of glucose in the growth medium; mediates in association with the substrate receptor VID24/GID4 the degradation of enzymes involved in gluconeogenesis when cells are shifted to glucose-containing medium. Required for proteasome-dependent catabolite degradation of fructose-1,6-bisphosphatase (FBP1), malate dehydrogenase (MDH2), and other gluconeogenic enzymes. The sequence is that of E3 ubiquitin-protein ligase RMD5 from Saccharomyces cerevisiae (strain ATCC 204508 / S288c) (Baker's yeast).